We begin with the raw amino-acid sequence, 310 residues long: Methionyl-tRNA formyltransferase (310 aa).

A (6S)-5,6,7,8-tetrahydrofolate-binding site is contributed by 110–113; sequence SLLP.

Belongs to the Fmt family.

It carries out the reaction L-methionyl-tRNA(fMet) + (6R)-10-formyltetrahydrofolate = N-formyl-L-methionyl-tRNA(fMet) + (6S)-5,6,7,8-tetrahydrofolate + H(+). Attaches a formyl group to the free amino group of methionyl-tRNA(fMet). The formyl group appears to play a dual role in the initiator identity of N-formylmethionyl-tRNA by promoting its recognition by IF2 and preventing the misappropriation of this tRNA by the elongation apparatus. The sequence is that of Methionyl-tRNA formyltransferase from Clostridium acetobutylicum (strain ATCC 824 / DSM 792 / JCM 1419 / IAM 19013 / LMG 5710 / NBRC 13948 / NRRL B-527 / VKM B-1787 / 2291 / W).